The sequence spans 336 residues: DNA polymerase beta (336 aa).

Lysine 59, leucine 61, and valine 64 together coordinate K(+). Residues lysine 59, leucine 61, and valine 64 each coordinate Na(+). The active-site Nucleophile; Schiff-base intermediate with DNA; for 5'-dRP lyase activity is the lysine 71. Residue arginine 82 is modified to Omega-N-methylarginine; by PRMT6. Positions 100, 102, and 105 each coordinate K(+). Na(+)-binding residues include threonine 100, valine 102, and isoleucine 105. Arginine 148 contributes to the a 2'-deoxyribonucleoside 5'-triphosphate binding site. The residue at position 151 (arginine 151) is an Omega-N-methylarginine; by PRMT6. Residues serine 179, arginine 182, glycine 188, and aspartate 189 each coordinate a 2'-deoxyribonucleoside 5'-triphosphate. The tract at residues 182 to 191 (RGAESSGDID) is DNA-binding. Aspartate 189, aspartate 191, and aspartate 257 together coordinate Mg(2+).

Belongs to the DNA polymerase type-X family. Requires Mg(2+) as cofactor. Methylation by PRMT6 stimulates the polymerase activity by enhancing DNA binding and processivity. In terms of processing, ubiquitinated: monoubiquitinated by huwe1/arf-bp1. Monoubiquitinated protein is then the target of stub1/chip, which catalyzes polyubiquitination from monoubiquitin, leading to degradation by the proteasome. usp47 mediates the deubiquitination of monoubiquitinated protein, preventing polyubiquitination by STUB1/CHIP and its subsequent degradation.

Its subcellular location is the nucleus. The protein resides in the cytoplasm. The enzyme catalyses DNA(n) + a 2'-deoxyribonucleoside 5'-triphosphate = DNA(n+1) + diphosphate. It carries out the reaction a 5'-end 2'-deoxyribose-2'-deoxyribonucleotide-DNA = (2E,4S)-4-hydroxypenten-2-al-5-phosphate + a 5'-end 5'-phospho-2'-deoxyribonucleoside-DNA + H(+). The catalysed reaction is 2'-deoxyribonucleotide-(2'-deoxyribose 5'-phosphate)-2'-deoxyribonucleotide-DNA = a 3'-end 2'-deoxyribonucleotide-(2,3-dehydro-2,3-deoxyribose 5'-phosphate)-DNA + a 5'-end 5'-phospho-2'-deoxyribonucleoside-DNA + H(+). Repair polymerase that plays a key role in base-excision repair. During this process, the damaged base is excised by specific DNA glycosylases, the DNA backbone is nicked at the abasic site by an apurinic/apyrimidic (AP) endonuclease, and POLB removes 5'-deoxyribose-phosphate from the preincised AP site acting as a 5'-deoxyribose-phosphate lyase (5'-dRP lyase); through its DNA polymerase activity, it adds one nucleotide to the 3' end of the arising single-nucleotide gap. Conducts 'gap-filling' DNA synthesis in a stepwise distributive fashion rather than in a processive fashion as for other DNA polymerases. It is also able to cleave sugar-phosphate bonds 3' to an intact AP site, acting as an AP lyase. This Danio rerio (Zebrafish) protein is DNA polymerase beta (polb).